We begin with the raw amino-acid sequence, 634 residues long: Chaperone protein HtpG (634 aa).

The a; substrate-binding stretch occupies residues 1–339 (MAQETMSFQA…SADLPLNVSR (339 aa)). The tract at residues 340–559 (EILQESRDVK…DGEMSGYLQR (220 aa)) is b. Residues 560–634 (MLKAAGQQAP…ALLLARANEA (75 aa)) form a c region.

Belongs to the heat shock protein 90 family. As to quaternary structure, homodimer.

Its subcellular location is the cytoplasm. In terms of biological role, molecular chaperone. Has ATPase activity. The sequence is that of Chaperone protein HtpG from Paraburkholderia xenovorans (strain LB400).